The following is a 396-amino-acid chain: Phosphoglycerate kinase (396 aa).

Residues 19–21 (DFN), Arg-35, 58–61 (HLGR), Arg-117, and Arg-150 each bind substrate. ATP is bound by residues Lys-201, Glu-323, and 349–352 (GGDT).

Belongs to the phosphoglycerate kinase family. Monomer.

The protein resides in the cytoplasm. The enzyme catalyses (2R)-3-phosphoglycerate + ATP = (2R)-3-phospho-glyceroyl phosphate + ADP. The protein operates within carbohydrate degradation; glycolysis; pyruvate from D-glyceraldehyde 3-phosphate: step 2/5. The sequence is that of Phosphoglycerate kinase from Desulfosudis oleivorans (strain DSM 6200 / JCM 39069 / Hxd3) (Desulfococcus oleovorans).